We begin with the raw amino-acid sequence, 290 residues long: Protein MGF 110-9L (290 aa).

An N-terminal signal peptide occupies residues 1-19 (MKVIVLLLVLAVMQPVIQS). An A repeat occupies 1-160 (MKVIVLLLVL…QYSRMRMQAA (160 aa)). The next 2 membrane-spanning stretches (helical) occupy residues 128-148 (VENI…IGYV) and 163-183 (LLIF…IIMN). The stretch at 161–290 (TRLLIFLGLY…KRHVINQDDL (130 aa)) is one B repeat.

Belongs to the asfivirus MGF 110 family.

Its subcellular location is the membrane. The polypeptide is Protein MGF 110-9L (Ornithodoros (relapsing fever ticks)).